We begin with the raw amino-acid sequence, 466 residues long: GTPase Der (466 aa).

EngA-type G domains follow at residues 30 to 193 and 203 to 376; these read PVVA…PEVS and RRVA…ASWD. Residues 36–43, 83–87, 145–148, 209–216, 256–260, and 321–324 each bind GTP; these read GRPNVGKS, DTGGW, NKVD, GKPNVGKS, DTAGL, and NKWD. The KH-like domain occupies 377–459; the sequence is TRIATGPLNS…PIRINVRVRE (83 aa).

Belongs to the TRAFAC class TrmE-Era-EngA-EngB-Septin-like GTPase superfamily. EngA (Der) GTPase family. In terms of assembly, associates with the 50S ribosomal subunit.

Its function is as follows. GTPase that plays an essential role in the late steps of ribosome biogenesis. The polypeptide is GTPase Der (Mycobacterium avium (strain 104)).